Consider the following 425-residue polypeptide: Synaptotagmin-4 (425 aa).

Topologically, residues methionine 1 to threonine 16 are vesicular. A helical membrane pass occupies residues valine 17 to cysteine 37. The Cytoplasmic portion of the chain corresponds to cysteine 38–glycine 425. 2 disordered regions span residues asparagine 102–valine 121 and phenylalanine 126–serine 147. The segment covering phenylalanine 105–glutamate 119 has biased composition (polar residues). Serine 135 is modified (phosphoserine; by MAPK8). Residues glutamate 137 to threonine 146 show a composition bias toward low complexity. C2 domains lie at lysine 153 to threonine 274 and glycine 287 to histidine 420. Residues aspartate 246, serine 249, and aspartate 252 each contribute to the Ca(2+) site.

The protein belongs to the synaptotagmin family. Interacts with KIF1A; the interaction increases in presence of calcium and decreases when SYT4 is phosphorylated at Ser-135. It depends on Ca(2+) as a cofactor. Post-translationally, phosphorylation at Ser-135 by MAPK8/JNK1 reduces interaction with KIF1A and neuronal dense core vesicles mobility. In terms of tissue distribution, widely expressed. Expressed in the brain. Expressed in pituitary gland, cerebellum, cortex, hypothalamus and hippocampus.

Its subcellular location is the cytoplasmic vesicle. It is found in the secretory vesicle. The protein resides in the neuronal dense core vesicle membrane. Synaptotagmin family member which does not bind Ca(2+). Involved in neuronal dense core vesicles (DCVs) mobility through its interaction with KIF1A. Upon increased neuronal activity, phosphorylation by MAPK8/JNK1 destabilizes the interaction with KIF1A and captures DCVs to synapses. Plays a role in dendrite formation by melanocytes. This chain is Synaptotagmin-4 (Syt4), found in Rattus norvegicus (Rat).